A 218-amino-acid chain; its full sequence is Zinc finger BED domain-containing protein 2 (218 aa).

A compositionally biased stretch (acidic residues) spans 1–11 (MMRREDEEEEG). The interval 1 to 24 (MMRREDEEEEGTMMKAKGDLEMKE) is disordered. The BED-type zinc-finger motif lies at 52–113 (TRFSEAWEYF…SMHREELEKS (62 aa)). Zn(2+)-binding residues include Cys78, Cys81, His101, and His106. The segment at 104 to 137 (SMHREELEKSGHGQAGQRQDPRPHGPQLPTGIEG) is disordered. Basic and acidic residues predominate over residues 105–114 (MHREELEKSG).

As to expression, expressed in keratinocytes.

It is found in the nucleus. In terms of biological role, transcriptional regulator which has intrinsic repressor activity and which competes with the transcriptional activator IRF1 for binding to the 5'-[CA]GAA[AC]C[CT]-3' consensus sequence in gene promoters. May thereby play a role in keratinocyte differentiation. The sequence is that of Zinc finger BED domain-containing protein 2 (ZBED2) from Homo sapiens (Human).